A 270-amino-acid chain; its full sequence is Formamidopyrimidine-DNA glycosylase (270 aa).

The Schiff-base intermediate with DNA role is filled by Pro-2. The active-site Proton donor is Glu-3. Lys-58 functions as the Proton donor; for beta-elimination activity in the catalytic mechanism. Residues His-91, Arg-109, and Arg-151 each coordinate DNA. The FPG-type zinc-finger motif lies at 236 to 270; the sequence is MVYNRQEEPCRLCGTPIRQIRQGQRSTYYCPLCQP. The active-site Proton donor; for delta-elimination activity is Arg-260.

The protein belongs to the FPG family. Monomer. The cofactor is Zn(2+).

The catalysed reaction is Hydrolysis of DNA containing ring-opened 7-methylguanine residues, releasing 2,6-diamino-4-hydroxy-5-(N-methyl)formamidopyrimidine.. It carries out the reaction 2'-deoxyribonucleotide-(2'-deoxyribose 5'-phosphate)-2'-deoxyribonucleotide-DNA = a 3'-end 2'-deoxyribonucleotide-(2,3-dehydro-2,3-deoxyribose 5'-phosphate)-DNA + a 5'-end 5'-phospho-2'-deoxyribonucleoside-DNA + H(+). Involved in base excision repair of DNA damaged by oxidation or by mutagenic agents. Acts as a DNA glycosylase that recognizes and removes damaged bases. Has a preference for oxidized purines, such as 7,8-dihydro-8-oxoguanine (8-oxoG). Has AP (apurinic/apyrimidinic) lyase activity and introduces nicks in the DNA strand. Cleaves the DNA backbone by beta-delta elimination to generate a single-strand break at the site of the removed base with both 3'- and 5'-phosphates. The sequence is that of Formamidopyrimidine-DNA glycosylase from Chromobacterium violaceum (strain ATCC 12472 / DSM 30191 / JCM 1249 / CCUG 213 / NBRC 12614 / NCIMB 9131 / NCTC 9757 / MK).